The sequence spans 487 residues: N-succinylglutamate 5-semialdehyde dehydrogenase (487 aa).

Glycine 221–glycine 226 is a binding site for NAD(+). Residues glutamate 244 and cysteine 278 contribute to the active site.

Belongs to the aldehyde dehydrogenase family. AstD subfamily.

It carries out the reaction N-succinyl-L-glutamate 5-semialdehyde + NAD(+) + H2O = N-succinyl-L-glutamate + NADH + 2 H(+). Its pathway is amino-acid degradation; L-arginine degradation via AST pathway; L-glutamate and succinate from L-arginine: step 4/5. In terms of biological role, catalyzes the NAD-dependent reduction of succinylglutamate semialdehyde into succinylglutamate. The polypeptide is N-succinylglutamate 5-semialdehyde dehydrogenase (Pseudomonas putida (strain ATCC 47054 / DSM 6125 / CFBP 8728 / NCIMB 11950 / KT2440)).